Reading from the N-terminus, the 116-residue chain is Ribosome-binding factor A (116 aa).

The protein belongs to the RbfA family. Monomer. Binds 30S ribosomal subunits, but not 50S ribosomal subunits or 70S ribosomes.

It is found in the cytoplasm. In terms of biological role, one of several proteins that assist in the late maturation steps of the functional core of the 30S ribosomal subunit. Associates with free 30S ribosomal subunits (but not with 30S subunits that are part of 70S ribosomes or polysomes). Required for efficient processing of 16S rRNA. May interact with the 5'-terminal helix region of 16S rRNA. The protein is Ribosome-binding factor A of Enterococcus faecalis (strain ATCC 700802 / V583).